The sequence spans 328 residues: C-type lectin domain family 4 member K (328 aa).

At 1-43 (MTVEKEAPDAHFTVDKQNISLWPREPPPKSGPSLVPGKTPTVR) the chain is on the cytoplasmic side. Residues 44 to 64 (AALICLTLVLVASVLLQAVLY) form a helical; Signal-anchor for type II membrane protein membrane-spanning segment. The Extracellular segment spans residues 65–328 (PRFMGTISDV…CKRPYVPSEP (264 aa)). 3 N-linked (GlcNAc...) asparagine glycosylation sites follow: Asn-87, Asn-113, and Asn-180. The stretch at 145 to 190 (EEVSTLNAQIPELKSDLEKASALNTKIRALQGSLENMSKLLKRQND) forms a coiled coil. A C-type lectin domain is found at 202–320 (FKGNFYYFSL…CDKTFLFICK (119 aa)). Disulfide bonds link Cys-223–Cys-319 and Cys-295–Cys-311.

Homotrimer. In terms of tissue distribution, exclusively expressed by Langerhans cells. Expressed in astrocytoma and malignant ependymoma, but not in normal brain tissues.

It localises to the membrane. In terms of biological role, calcium-dependent lectin displaying mannose-binding specificity. Induces the formation of Birbeck granules (BGs); is a potent regulator of membrane superimposition and zippering. Binds to sulfated as well as mannosylated glycans, keratan sulfate (KS) and beta-glucans. Facilitates uptake of antigens and is involved in the routing and/or processing of antigen for presentation to T cells. Major receptor on primary Langerhans cells for Candida species, Saccharomyces species, and Malassezia furfur. Protects against human immunodeficiency virus-1 (HIV-1) infection. Binds to high-mannose structures present on the envelope glycoprotein which is followed by subsequent targeting of the virus to the Birbeck granules leading to its rapid degradation. In Homo sapiens (Human), this protein is C-type lectin domain family 4 member K (CD207).